The primary structure comprises 36 residues: MTTFDFPSVLVPLVGLIFPAMAMASLFLHVQNNKTV.

A helical membrane pass occupies residues 8 to 28 (SVLVPLVGLIFPAMAMASLFL).

Belongs to the PsaI family.

Its subcellular location is the plastid. It localises to the chloroplast thylakoid membrane. May help in the organization of the PsaL subunit. This Daucus carota (Wild carrot) protein is Photosystem I reaction center subunit VIII.